The following is a 338-amino-acid chain: Protein FosB (338 aa).

2 disordered regions span residues 1–54 (MFQA…PGSF) and 80–179 (AQSQ…RREL). Residues 13 to 31 (SRCSSSPSAESQYLSSVDS) show a composition bias toward polar residues. Position 27 is a phosphoserine (S27). Over residues 123–137 (PSTSTSTSGPVSARP) the composition is skewed to low complexity. Positions 155 to 218 (EEKRRVRRER…ERLEFVLVAH (64 aa)) constitute a bZIP domain. Residues 157–182 (KRRVRRERNKLAAAKCRNRRRELTDR) are basic motif. Residues 183 to 211 (LQAETDQLEEEKAELESEIAELQKEKERL) form a leucine-zipper region. Disordered regions lie at residues 222 to 276 (CKIP…PPNL) and 315 to 338 (AGSQ…LLAL). Positions 256–265 (LPPPPPPPLP) are enriched in pro residues. Positions 266–276 (FQSSRDAPPNL) are enriched in polar residues.

This sequence belongs to the bZIP family. Fos subfamily. In terms of assembly, heterodimer; binds to DNA as heterodimer. Component of an AP-1 transcription factor complex; composed of FOS-JUN heterodimers. As part of the AP-1 transcription factor complex, forms heterodimers with JUN, JUNB or JUND, thereby binding to the AP-1 consensus sequence and stimulating transcription. In terms of processing, phosphorylated; phosphorylation is induced by chronic electroconvulsive seizure (ECS) treatment. In terms of tissue distribution, expressed in brain. Expressed in pyramidal cells in CA1 and CA3, in the dentate gyrus and the nucleus accumbens (at protein level).

It is found in the nucleus. In terms of biological role, heterodimerizes with proteins of the JUN family to form an AP-1 transcription factor complex, thereby enhancing their DNA binding activity to an AP-1 consensus sequence 5'-TGA[GC]TCA-3' and enhancing their transcriptional activity. Exhibits transactivation activity in vitro. As part of the AP-1 complex, facilitates enhancer selection together with cell-type-specific transcription factors by collaboratively binding to nucleosomal enhancers and recruiting the SWI/SNF (BAF) chromatin remodeling complex to establish accessible chromatin. Together with JUN, plays a role in activation-induced cell death of T cells by binding to the AP-1 promoter site of FASLG/CD95L, and inducing its transcription in response to activation of the TCR/CD3 signaling pathway. Involved in the display of nurturing behavior towards newborns. May play a role in neurogenesis in the hippocampus and in learning and memory-related tasks by regulating the expression of various genes involved in neurogenesis, depression and epilepsy. Implicated in behavioral responses related to morphine reward and spatial memory. This Rattus norvegicus (Rat) protein is Protein FosB.